Consider the following 450-residue polypeptide: UDP-N-acetylmuramoylalanine--D-glutamate ligase (450 aa).

119–125 (GSNGKTT) serves as a coordination point for ATP.

The protein belongs to the MurCDEF family.

It is found in the cytoplasm. It catalyses the reaction UDP-N-acetyl-alpha-D-muramoyl-L-alanine + D-glutamate + ATP = UDP-N-acetyl-alpha-D-muramoyl-L-alanyl-D-glutamate + ADP + phosphate + H(+). The protein operates within cell wall biogenesis; peptidoglycan biosynthesis. Functionally, cell wall formation. Catalyzes the addition of glutamate to the nucleotide precursor UDP-N-acetylmuramoyl-L-alanine (UMA). The sequence is that of UDP-N-acetylmuramoylalanine--D-glutamate ligase from Streptococcus pneumoniae serotype 4 (strain ATCC BAA-334 / TIGR4).